The following is a 460-amino-acid chain: Vitamin K-dependent protein C (460 aa).

The N-terminal stretch at Met1–Ser18 is a signal peptide. Residues Ile19–Arg41 constitute a propeptide that is removed on maturation. A Gla domain is found at Ala42 to Asp87. 10 positions are modified to 4-carboxyglutamate: Glu47, Glu48, Glu55, Glu57, Glu60, Glu61, Glu66, Glu67, Glu70, and Glu76. Cys58 and Cys63 form a disulfide bridge. 9 disulfide bridges follow: Cys91–Cys110, Cys100–Cys105, Cys104–Cys119, Cys121–Cys130, Cys139–Cys150, Cys146–Cys159, Cys161–Cys174, Cys182–Cys319, and Cys238–Cys254. EGF-like domains are found at residues Leu96 to Gln131 and Arg135 to Lys175. The residue at position 112 (Asp112) is a (3R)-3-hydroxyaspartate. In terms of domain architecture, Peptidase S1 spans Val213–Gly449. Asn214 carries an N-linked (GlcNAc...) asparagine glycan. The active-site Charge relay system is His253. N-linked (GlcNAc...) asparagine glycosylation occurs at Asn290. The Charge relay system role is filled by Asp299. N-linked (GlcNAc...) asparagine glycosylation occurs at Asn354. Cystine bridges form between Cys372–Cys386 and Cys397–Cys425. Catalysis depends on Ser401, which acts as the Charge relay system.

The protein belongs to the peptidase S1 family. In terms of assembly, synthesized as a single chain precursor, which is cleaved into a light chain and a heavy chain held together by a disulfide bond. The enzyme is then activated by thrombin, which cleaves a tetradecapeptide from the amino end of the heavy chain; this reaction, which occurs at the surface of endothelial cells, is strongly promoted by thrombomodulin. Post-translationally, the vitamin K-dependent, enzymatic carboxylation of some Glu residues allows the modified protein to bind calcium. In terms of processing, the iron and 2-oxoglutarate dependent 3-hydroxylation of aspartate and asparagine is (R) stereospecific within EGF domains. In terms of tissue distribution, plasma; synthesized in the liver.

It is found in the secreted. Its subcellular location is the golgi apparatus. The protein localises to the endoplasmic reticulum. The enzyme catalyses Degradation of blood coagulation factors Va and VIIIa.. Its function is as follows. Protein C is a vitamin K-dependent serine protease that regulates blood coagulation by inactivating factors Va and VIIIa in the presence of calcium ions and phospholipids. Exerts a protective effect on the endothelial cell barrier function. In Mus musculus (Mouse), this protein is Vitamin K-dependent protein C (Proc).